The primary structure comprises 53 residues: U13-myrmicitoxin-Tb1a (53 aa).

The signal sequence occupies residues 1–23 (MKLIYIFSLVAVIAVTMIPGIMG). The propeptide occupies 24–29 (EAEAEG). Lysine 52 is modified (lysine amide).

As to expression, expressed by the venom gland.

It localises to the secreted. In vivo, this neurotoxin paralyzes about 70% of blowflies (L.caesar) one hour after intrathoracic injection, when tested at high doses (45 nmol/g). The protein is U13-myrmicitoxin-Tb1a of Tetramorium bicarinatum (Tramp ant).